Here is a 70-residue protein sequence, read N- to C-terminus: uncharacterized protein (70 aa).

A C2H2-type zinc finger spans residues 21–43; it reads YECPICGEIYIKRKSMITHLRKH.

This is an uncharacterized protein from Saccharolobus islandicus (Sulfolobus islandicus).